Here is a 419-residue protein sequence, read N- to C-terminus: Phosphoglycerate kinase (419 aa).

(2R)-3-phosphoglycerate contacts are provided by Val24, Asp25, Phe26, Asn27, Arg40, Ser63, His64, Gly66, Arg67, Leu122, Arg123, His169, and Arg170. Residue Gly213 participates in ADP binding. Gly213 lines the CDP pocket. AMP contacts are provided by Ala214 and Lys215. Residue Ala214 coordinates ATP. Ala214 serves as a coordination point for Mg(2+). Positions 217 and 218 each coordinate Mg(2+). Asp218 contacts CDP. Residue Lys219 coordinates AMP. Lys219 provides a ligand contact to ATP. Gly237 provides a ligand contact to ADP. Residue Gly237 coordinates CDP. Positions 238 and 313 each coordinate AMP. ATP contacts are provided by Gly238 and Gly313. Residues Gly338 and Phe343 each contribute to the CDP site. An ADP-binding site is contributed by Phe343. Glu344 lines the AMP pocket. 3 residues coordinate ATP: Glu344, Asp375, and Thr376. Position 375 (Asp375) interacts with Mg(2+).

It belongs to the phosphoglycerate kinase family. In terms of assembly, monomer. Mg(2+) is required as a cofactor.

It carries out the reaction (2R)-3-phosphoglycerate + ATP = (2R)-3-phospho-glyceroyl phosphate + ADP. It functions in the pathway carbohydrate degradation; glycolysis; pyruvate from D-glyceraldehyde 3-phosphate: step 2/5. The chain is Phosphoglycerate kinase (PGK) from Sterkiella nova (Ciliate).